The primary structure comprises 166 residues: Regulator of ribonuclease activity A (166 aa).

Belongs to the RraA family. As to quaternary structure, homotrimer. Binds to both RNA-binding sites in the C-terminal region of Rne and to RhlB.

The protein localises to the cytoplasm. Its function is as follows. Globally modulates RNA abundance by binding to RNase E (Rne) and regulating its endonucleolytic activity. Can modulate Rne action in a substrate-dependent manner by altering the composition of the degradosome. Modulates RNA-binding and helicase activities of the degradosome. This chain is Regulator of ribonuclease activity A, found in Glaesserella parasuis serovar 5 (strain SH0165) (Haemophilus parasuis).